We begin with the raw amino-acid sequence, 144 residues long: Large ribosomal subunit protein uL15 (144 aa).

Positions 1–52 (MKLHTLKSTPGARVEKHRVGRGHAAGKGKQAGKGQSGQNKRHGHRLGFEGGQ) are disordered. Over residues 15–26 (EKHRVGRGHAAG) the composition is skewed to basic residues.

It belongs to the universal ribosomal protein uL15 family. Part of the 50S ribosomal subunit.

Its function is as follows. Binds to the 23S rRNA. This is Large ribosomal subunit protein uL15 from Mycoplasmopsis agalactiae (strain NCTC 10123 / CIP 59.7 / PG2) (Mycoplasma agalactiae).